A 387-amino-acid chain; its full sequence is Succinate--CoA ligase [ADP-forming] subunit beta (387 aa).

Residues Lys46, 53 to 55 (GRG), Glu99, Ala102, and Glu107 each bind ATP. 2 residues coordinate Mg(2+): Asn199 and Asp213. Residues Asn264 and 321–323 (GIV) contribute to the substrate site.

It belongs to the succinate/malate CoA ligase beta subunit family. In terms of assembly, heterotetramer of two alpha and two beta subunits. Mg(2+) is required as a cofactor.

The enzyme catalyses succinate + ATP + CoA = succinyl-CoA + ADP + phosphate. The catalysed reaction is GTP + succinate + CoA = succinyl-CoA + GDP + phosphate. It participates in carbohydrate metabolism; tricarboxylic acid cycle; succinate from succinyl-CoA (ligase route): step 1/1. Functionally, succinyl-CoA synthetase functions in the citric acid cycle (TCA), coupling the hydrolysis of succinyl-CoA to the synthesis of either ATP or GTP and thus represents the only step of substrate-level phosphorylation in the TCA. The beta subunit provides nucleotide specificity of the enzyme and binds the substrate succinate, while the binding sites for coenzyme A and phosphate are found in the alpha subunit. This chain is Succinate--CoA ligase [ADP-forming] subunit beta, found in Campylobacter jejuni subsp. jejuni serotype O:23/36 (strain 81-176).